Reading from the N-terminus, the 331-residue chain is Protein Brevis radix-like 1 (331 aa).

Residues 1–111 form a disordered region; that stretch reads MFTCINCTKM…HQSGRPDSRF (111 aa). Polar residues-rich tracts occupy residues 25 to 41 and 48 to 66; these read STTP…TTQI and FSGS…SSNL. Residues 137–192 enclose the BRX 1 domain; it reads KEWMAQVEPGVHITFVSLPSGGNDLKRIRFSREVFDKWQAQRWWGENYDRIVELYN. Disordered stretches follow at residues 201–246 and 258–279; these read LQTP…VPHH and TTSS…GEWV. A compositionally biased stretch (basic and acidic residues) spans 221–235; sequence DSARESRDWTQRDNN. In terms of domain architecture, BRX 2 spans 276 to 331; the sequence is GEWVEEDEPGVYITIRQLPDGTRELRRVRFSRERFGEVHAKTWWEQNRDRIQTQYL.

It belongs to the BRX family. Heterodimer with BRXL1. As to expression, expressed in roots.

Its subcellular location is the nucleus. Functionally, may act as a regulator of cell proliferation and elongation in the root. This is Protein Brevis radix-like 1 (BRXL1) from Arabidopsis thaliana (Mouse-ear cress).